Reading from the N-terminus, the 210-residue chain is Thymidylate kinase (210 aa).

10-17 (GLEGAGKS) is a binding site for ATP.

It belongs to the thymidylate kinase family.

It carries out the reaction dTMP + ATP = dTDP + ADP. In terms of biological role, phosphorylation of dTMP to form dTDP in both de novo and salvage pathways of dTTP synthesis. This is Thymidylate kinase (tmk) from Haemophilus influenzae (strain ATCC 51907 / DSM 11121 / KW20 / Rd).